Here is a 121-residue protein sequence, read N- to C-terminus: Small ribosomal subunit protein uS13 (121 aa).

The disordered stretch occupies residues Lys-93 to Lys-121.

Belongs to the universal ribosomal protein uS13 family. Part of the 30S ribosomal subunit. Forms a loose heterodimer with protein S19. Forms two bridges to the 50S subunit in the 70S ribosome.

Located at the top of the head of the 30S subunit, it contacts several helices of the 16S rRNA. In the 70S ribosome it contacts the 23S rRNA (bridge B1a) and protein L5 of the 50S subunit (bridge B1b), connecting the 2 subunits; these bridges are implicated in subunit movement. Contacts the tRNAs in the A and P-sites. The sequence is that of Small ribosomal subunit protein uS13 from Burkholderia ambifaria (strain ATCC BAA-244 / DSM 16087 / CCUG 44356 / LMG 19182 / AMMD) (Burkholderia cepacia (strain AMMD)).